A 212-amino-acid polypeptide reads, in one-letter code: ER lumen protein-retaining receptor 2 (212 aa).

Residues 1 to 4 (MNIF) are Lumenal-facing. Residues 5–24 (RLTGDLSHLAAIIILLLKIW) traverse the membrane as a helical segment. Topologically, residues 25–32 (KSRSCAGI) are cytoplasmic. The helical transmembrane segment at 33–52 (SGKSQLLFALVFTTRYLDLF) threads the bilayer. The tract at residues 47–48 (RY) is interaction with the K-D-E-L motif on target proteins. Residues 53 to 58 (TSFISL) are Lumenal-facing. A helical membrane pass occupies residues 59 to 79 (YNTSMKLIYIACSYATVYLIY). Over 80–92 (MKFKATYDGNHDT) the chain is Cytoplasmic. A helical membrane pass occupies residues 93-110 (FRVEFLIVPVGGLSFLVN). The Lumenal portion of the chain corresponds to 111 to 116 (HDFSPL). A helical transmembrane segment spans residues 117–135 (EILWTFSIYLESVAILPQL). Residues 136–149 (FMISKTGEAETITT) lie on the Cytoplasmic side of the membrane. A helical transmembrane segment spans residues 150-168 (HYLFFLGLYRALYLVNWIW). The interaction with the K-D-E-L motif on target proteins stretch occupies residues 159-169 (RALYLVNWIWR). Topologically, residues 169–178 (RYYFEGFFDL) are lumenal. A helical transmembrane segment spans residues 179–199 (IAVVAGVVQTVLYCDFFYLYV). Topologically, residues 200 to 212 (TKVLKGKKLSLPA) are cytoplasmic. The segment at 204-207 (KGKK) is important for recycling of cargo proteins with the sequence motif K-D-E-L from the Golgi to the endoplasmic reticulum.

It belongs to the ERD2 family.

Its subcellular location is the endoplasmic reticulum membrane. It localises to the golgi apparatus membrane. The protein localises to the cytoplasmic vesicle. The protein resides in the COPI-coated vesicle membrane. In terms of biological role, membrane receptor that binds the K-D-E-L sequence motif in the C-terminal part of endoplasmic reticulum resident proteins and maintains their localization in that compartment by participating to their vesicle-mediated recycling back from the Golgi. Binding is pH dependent, and is optimal at pH 5-5.4. This is ER lumen protein-retaining receptor 2 (KDELR2) from Gallus gallus (Chicken).